The chain runs to 67 residues: DNA-directed RNA polymerase subunit omega (67 aa).

Belongs to the RNA polymerase subunit omega family. The RNAP catalytic core consists of 2 alpha, 1 beta, 1 beta' and 1 omega subunit. When a sigma factor is associated with the core the holoenzyme is formed, which can initiate transcription.

It catalyses the reaction RNA(n) + a ribonucleoside 5'-triphosphate = RNA(n+1) + diphosphate. Its function is as follows. Promotes RNA polymerase assembly. Latches the N- and C-terminal regions of the beta' subunit thereby facilitating its interaction with the beta and alpha subunits. The polypeptide is DNA-directed RNA polymerase subunit omega (Bordetella petrii (strain ATCC BAA-461 / DSM 12804 / CCUG 43448)).